Reading from the N-terminus, the 309-residue chain is NADH-cytochrome b5 reductase 1 (309 aa).

Residues phenylalanine 30–glycine 50 form a helical membrane-spanning segment. The FAD-binding FR-type domain occupies threonine 60–threonine 165. Residues threonine 145–glycine 160 and histidine 171–leucine 208 contribute to the FAD site.

This sequence belongs to the flavoprotein pyridine nucleotide cytochrome reductase family. In terms of assembly, monomer. Component of the 2-(3-amino-3-carboxypropyl)histidine synthase complex composed of dph1, dph2, dph3 and a NADH-dependent reductase, predominantly cbr1. FAD serves as cofactor.

The protein resides in the mitochondrion outer membrane. The catalysed reaction is 2 Fe(III)-[cytochrome b5] + NADH = 2 Fe(II)-[cytochrome b5] + NAD(+) + H(+). The enzyme catalyses 2 Fe(3+)-[Dph3] + NADH = 2 Fe(2+)-[Dph3] + NAD(+) + H(+). Its pathway is protein modification; peptidyl-diphthamide biosynthesis. NADH-dependent reductase for dph3 and cytochrome b5. Required for the first step of diphthamide biosynthesis, a post-translational modification of histidine which occurs in elongation factor 2. Dph1 and dph2 transfer a 3-amino-3-carboxypropyl (ACP) group from S-adenosyl-L-methionine (SAM) to a histidine residue, the reaction is assisted by a reduction system comprising dph3 and a NADH-dependent reductase, predominantly cbr1. By reducing dph3, also involved in the formation of the tRNA wobble base modification mcm5s 2U (5-methoxycarbonylmethyl-2-thiouridine), mediated by the elongator complex. The cytochrome b5/NADH cytochrome b5 reductase electron transfer system supports the catalytic activity of several sterol biosynthetic enzymes. The polypeptide is NADH-cytochrome b5 reductase 1 (cbr1) (Aspergillus fumigatus (strain ATCC MYA-4609 / CBS 101355 / FGSC A1100 / Af293) (Neosartorya fumigata)).